Reading from the N-terminus, the 194-residue chain is Isopentenyl-diphosphate Delta-isomerase (194 aa).

Residues His27 and His34 each coordinate Mn(2+). Residues 32-166 (ALHLAFSCHV…PWAFSPWLTL (135 aa)) form the Nudix hydrolase domain. The active site involves Cys69. Mn(2+) is bound at residue His71. Glu89 provides a ligand contact to Mg(2+). Glu116 and Glu118 together coordinate Mn(2+). The active site involves Glu118.

The protein belongs to the IPP isomerase type 1 family. Requires Mg(2+) as cofactor. It depends on Mn(2+) as a cofactor.

It localises to the cytoplasm. The catalysed reaction is isopentenyl diphosphate = dimethylallyl diphosphate. It participates in isoprenoid biosynthesis; dimethylallyl diphosphate biosynthesis; dimethylallyl diphosphate from isopentenyl diphosphate: step 1/1. Catalyzes the 1,3-allylic rearrangement of the homoallylic substrate isopentenyl (IPP) to its highly electrophilic allylic isomer, dimethylallyl diphosphate (DMAPP). The polypeptide is Isopentenyl-diphosphate Delta-isomerase (Clavibacter michiganensis subsp. michiganensis (strain NCPPB 382)).